The chain runs to 475 residues: Ribulose bisphosphate carboxylase large chain (475 aa).

The propeptide occupies 1–2 (MS). Pro3 carries the post-translational modification N-acetylproline. Residue Lys14 is modified to N6,N6,N6-trimethyllysine. Substrate is bound by residues Asn123 and Thr173. The active-site Proton acceptor is Lys175. Lys177 serves as a coordination point for substrate. The Mg(2+) site is built by Lys201, Asp203, and Glu204. Residue Lys201 is modified to N6-carboxylysine. Catalysis depends on His294, which acts as the Proton acceptor. 3 residues coordinate substrate: Arg295, His327, and Ser379.

Belongs to the RuBisCO large chain family. Type I subfamily. Heterohexadecamer of 8 large chains and 8 small chains; disulfide-linked. The disulfide link is formed within the large subunit homodimers. It depends on Mg(2+) as a cofactor. Post-translationally, the disulfide bond which can form in the large chain dimeric partners within the hexadecamer appears to be associated with oxidative stress and protein turnover.

It is found in the plastid. Its subcellular location is the chloroplast. It catalyses the reaction 2 (2R)-3-phosphoglycerate + 2 H(+) = D-ribulose 1,5-bisphosphate + CO2 + H2O. It carries out the reaction D-ribulose 1,5-bisphosphate + O2 = 2-phosphoglycolate + (2R)-3-phosphoglycerate + 2 H(+). Its function is as follows. RuBisCO catalyzes two reactions: the carboxylation of D-ribulose 1,5-bisphosphate, the primary event in carbon dioxide fixation, as well as the oxidative fragmentation of the pentose substrate in the photorespiration process. Both reactions occur simultaneously and in competition at the same active site. The polypeptide is Ribulose bisphosphate carboxylase large chain (Pelargonium hortorum (Common geranium)).